We begin with the raw amino-acid sequence, 657 residues long: Filensin (657 aa).

Residues 1-38 (MYRSSFLREVRKEKYERSDAYDELRGSPEFDSLAQAQG) are head. Residues 38–318 (GLENLQELNE…RIIENEDSRL (281 aa)) enclose the IF rod domain. The interval 39-73 (LENLQELNERFASYINRARVLEQRNTILRKQLETF) is coil 1A. Positions 74–82 (QRMDELVGL) are linker 1. Residues 83 to 182 (DEAFAGQIEF…RYKKNLMEIQ (100 aa)) form a coil 1B region. Residues 183–199 (TYVNILQQIIQTTPRVS) form a linker 12 region. The coil 2 stretch occupies residues 200-318 (PITTGISEEK…RIIENEDSRL (119 aa)). The tract at residues 319–657 (NSAIAGTPVT…SKKKPGDKGS (339 aa)) is tail. Disordered regions lie at residues 503–530 (IGGD…ICER) and 565–593 (PDVS…TDHD). Basic and acidic residues predominate over residues 519-530 (PSEKEKRDICER).

This sequence belongs to the intermediate filament family. In terms of tissue distribution, detected in eye lens fiber cells (at protein level). Detected in embryonic eye lens.

Its subcellular location is the cell membrane. The protein localises to the cytoplasm. It is found in the cytoskeleton. It localises to the cell cortex. Functionally, required for the correct formation of lens intermediate filaments. The protein is Filensin (BFSP1) of Gallus gallus (Chicken).